A 296-amino-acid polypeptide reads, in one-letter code: Acetylglutamate kinase (296 aa).

Substrate-binding positions include 69–70 (GG), Arg91, and Asn193.

Belongs to the acetylglutamate kinase family. ArgB subfamily.

The protein localises to the cytoplasm. It carries out the reaction N-acetyl-L-glutamate + ATP = N-acetyl-L-glutamyl 5-phosphate + ADP. Its pathway is amino-acid biosynthesis; L-arginine biosynthesis; N(2)-acetyl-L-ornithine from L-glutamate: step 2/4. Functionally, catalyzes the ATP-dependent phosphorylation of N-acetyl-L-glutamate. This is Acetylglutamate kinase from Delftia acidovorans (strain DSM 14801 / SPH-1).